We begin with the raw amino-acid sequence, 219 residues long: Nodulation protein NolA (219 aa).

The 70-residue stretch at 10–79 folds into the HTH merR-type domain; the sequence is RWRIGELAEA…LHEIRKAMEG (70 aa). The H-T-H motif DNA-binding region spans 13–32; that stretch reads IGELAEATGVTVRTLHHYEH.

In terms of biological role, involved in genotype-specific nodulation of soybeans. In Bradyrhizobium elkanii, this protein is Nodulation protein NolA (nolA).